Here is a 377-residue protein sequence, read N- to C-terminus: MAWRGWAQRGWGCGQAWTLPVCGGSYEELTAALAPSRLLRRRFNFFIQQKCGFRKAPRKVEPRRSDTSSEAYKRSALIPPVEETAFYPSPYPIRTLVKPLFFTVGFTGCAFGSAAIWQYESLKSKVQSYFDGIKADWLDSIRPQKEGDFRKEINKWWNNLSDGQRTVTGIIAANVFVFCLWRVPSLQRTMIRYFTSNPASKVLCSPMLLSTFSHFSLFHMAANMYVLWSFSSSIVNILGQEQFMAVYLSAGVISTFVSYVCKVATGRYGPSLGASGAIMTVLAAVCTKIPEGRLAIIFLPMFTFTAGNALKAIIAMDTAGMILGWKFFDHAAHLGGALFGIWYITYGHELIWKNREPLVKIWHEMRTNSPKKGGGSK.

Residues M1 to G52 constitute a mitochondrion transit peptide. Residues F53–P99 lie on the Mitochondrial matrix side of the membrane. Phosphoserine occurs at positions 65 and 68. The helical transmembrane segment at L100–Y119 threads the bilayer. The Mitochondrial intermembrane portion of the chain corresponds to E120–R165. The chain crosses the membrane as a helical span at residues T166–S185. The Mitochondrial matrix segment spans residues L186–S205. Residues P206–W228 form a helical membrane-spanning segment. Topologically, residues S229 to Q242 are mitochondrial intermembrane. The chain crosses the membrane as a helical span at residues F243 to V260. At C261 to P270 the chain is on the mitochondrial matrix side. The helical transmembrane segment at S271–T287 threads the bilayer. S275 (nucleophile) is an active-site residue. Over K288 to R293 the chain is Mitochondrial intermembrane. A helical membrane pass occupies residues L294 to M316. The Mitochondrial matrix portion of the chain corresponds to D317 to H330. The helical transmembrane segment at A331–W352 threads the bilayer. H333 is a catalytic residue. At K353–K377 the chain is on the mitochondrial intermembrane side.

The protein belongs to the peptidase S54 family. In terms of assembly, interacts with PSEN1 and PSEN2. Binds OPA1. In terms of processing, P-beta is proteolytically processed (beta-cleavage) in a PARL-dependent manner.

The protein localises to the mitochondrion inner membrane. It is found in the nucleus. It catalyses the reaction Cleaves type-1 transmembrane domains using a catalytic dyad composed of serine and histidine that are contributed by different transmembrane domains.. Functionally, required for the control of apoptosis during postnatal growth. Essential for proteolytic processing of an antiapoptotic form of OPA1 which prevents the release of mitochondrial cytochrome c in response to intrinsic apoptotic signals. Required for the maturation of PINK1 into its 52kDa mature form after its cleavage by mitochondrial-processing peptidase (MPP). Promotes cleavage of serine/threonine-protein phosphatase PGAM5 in damaged mitochondria in response to loss of mitochondrial membrane potential. Mediates differential cleavage of PINK1 and PGAM5 depending on the health status of mitochondria, disassociating from PINK1 and associating with PGAM5 in response to mitochondrial membrane potential loss. Required for processing of CLPB into a form with higher protein disaggregase activity by removing an autoinhibitory N-terminal peptide. Promotes processing of DIABLO/SMAC in the mitochondrion which is required for DIABLO apoptotic activity. Also required for cleavage of STARD7 and TTC19. Promotes changes in mitochondria morphology regulated by phosphorylation of P-beta domain. The polypeptide is Presenilin-associated rhomboid-like protein, mitochondrial (PARL) (Bos taurus (Bovine)).